Here is a 138-residue protein sequence, read N- to C-terminus: Spermatid nuclear transition protein 4 (138 aa).

Residues 1-11 (AKVSRKPREPR) show a composition bias toward basic and acidic residues. Residues 1 to 138 (AKVSRKPREP…QGVTRRGRRY (138 aa)) are disordered. Serine 4 carries the phosphoserine; by PKC modification. Positions 5-23 (RKPREPRTAVTQSTRRIKR) match the Nuclear localization signal motif. 3 stretches are compositionally biased toward basic residues: residues 19 to 34 (RRIK…RSRG), 43 to 57 (MKIK…RRKI), and 65 to 74 (KKAKKARKHF). Threonine 26 is modified (phosphothreonine; by PKA). The short motif at 54 to 72 (RRKIQTSAGQPKKAKKARK) is the Nuclear localization signal element. Residues 86 to 101 (NKKTNQNKRQNQNKRQ) show a composition bias toward low complexity. The span at 120 to 131 (PTTSCKWCSQGV) shows a compositional bias: polar residues.

The protein resides in the nucleus. The protein localises to the chromosome. Involved in nuclear basic protein transition: histones are replaced by spermatid specific proteins which are themselves replaced by protamines in late spermatids. The chain is Spermatid nuclear transition protein 4 (TNP4) from Sus scrofa (Pig).